The following is a 631-amino-acid chain: Phosphomethylpyrimidine synthase (631 aa).

Residues 54-80 (TLVGGDKDKPRYETNEPIPVYDTSGPY) are disordered. Over residues 58–67 (GDKDKPRYET) the composition is skewed to basic and acidic residues. Residues Asn239, Met268, Tyr297, His333, 353–355 (SRG), 394–397 (DGLR), and Glu433 contribute to the substrate site. His437 is a Zn(2+) binding site. Tyr460 contributes to the substrate binding site. A Zn(2+)-binding site is contributed by His501. Positions 581, 584, and 589 each coordinate [4Fe-4S] cluster.

The protein belongs to the ThiC family. Homodimer. [4Fe-4S] cluster is required as a cofactor.

The enzyme catalyses 5-amino-1-(5-phospho-beta-D-ribosyl)imidazole + S-adenosyl-L-methionine = 4-amino-2-methyl-5-(phosphooxymethyl)pyrimidine + CO + 5'-deoxyadenosine + formate + L-methionine + 3 H(+). It functions in the pathway cofactor biosynthesis; thiamine diphosphate biosynthesis. Functionally, catalyzes the synthesis of the hydroxymethylpyrimidine phosphate (HMP-P) moiety of thiamine from aminoimidazole ribotide (AIR) in a radical S-adenosyl-L-methionine (SAM)-dependent reaction. The protein is Phosphomethylpyrimidine synthase of Klebsiella pneumoniae subsp. pneumoniae (strain ATCC 700721 / MGH 78578).